The sequence spans 269 residues: Diaminopimelate epimerase (269 aa).

Residues N13, Q47, and N65 each coordinate substrate. C74 functions as the Proton donor in the catalytic mechanism. Residues 75-76, N149, N182, and 200-201 each bind substrate; these read GN and ER. The active-site Proton acceptor is C209. 210–211 contributes to the substrate binding site; sequence GT.

Belongs to the diaminopimelate epimerase family. In terms of assembly, homodimer.

Its subcellular location is the cytoplasm. The catalysed reaction is (2S,6S)-2,6-diaminopimelate = meso-2,6-diaminopimelate. Its pathway is amino-acid biosynthesis; L-lysine biosynthesis via DAP pathway; DL-2,6-diaminopimelate from LL-2,6-diaminopimelate: step 1/1. Functionally, catalyzes the stereoinversion of LL-2,6-diaminopimelate (L,L-DAP) to meso-diaminopimelate (meso-DAP), a precursor of L-lysine and an essential component of the bacterial peptidoglycan. The polypeptide is Diaminopimelate epimerase (Erythrobacter litoralis (strain HTCC2594)).